An 884-amino-acid polypeptide reads, in one-letter code: Cadherin-1 (884 aa).

A signal peptide spans M1–Q23. Positions E24 to R156 are excised as a propeptide. The disordered stretch occupies residues K119–P139. A compositionally biased stretch (basic residues) spans M121–R131. 5 Cadherin domains span residues D157–F264, T265–F377, N378–F488, M489–P595, and I596–K699. Topologically, residues D157 to V709 are extracellular. D259 contributes to the Ca(2+) binding site. 2 O-linked (Man...) serine glycosylation sites follow: S282 and S287. D290 provides a ligand contact to Ca(2+). T360, T472, T474, and T511 each carry an O-linked (Man...) threonine glycan. N560 is a glycosylation site (N-linked (GlcNAc...) asparagine). 3 O-linked (Man...) threonine glycosylation sites follow: T578, T580, and T582. N639 is a glycosylation site (N-linked (GlcNAc...) asparagine). The helical transmembrane segment at P710–L733 threads the bilayer. Topologically, residues R734–D884 are cytoplasmic. The segment at D749 to E808 is disordered. A phosphotyrosine; by SRC mark is found at Y755, Y756, and Y757. Positions Y757 to F769 are enriched in acidic residues. Positions E760–L771 are required for binding CTNND1 and PSEN1. Phosphoserine is present on S772. Residues R776–R786 are compositionally biased toward basic and acidic residues. Residues S795, S840, S842, and S848 each carry the phosphoserine modification. Positions I813–D884 are required for binding alpha, beta and gamma catenins.

As to quaternary structure, homodimer; disulfide-linked. Component of an E-cadherin/ catenin adhesion complex composed of at least E-cadherin/CDH1, beta-catenin/CTNNB1 or gamma-catenin/JUP, and potentially alpha-catenin/CTNNA1; the complex is located to adherens junctions. Found in a complex composed of CDH1, RAP1A and PKP3; PKP3 acts as a scaffold protein within the complex, the complex is required for CDH1 localization to mature desmosome cell junctions. Interacts with the TRPV4 and CTNNB1 complex. Interacts with CTNND1. The stable association of CTNNA1 is controversial as CTNNA1 was shown not to bind to F-actin when assembled in the complex. Alternatively, the CTNNA1-containing complex may be linked to F-actin by other proteins such as LIMA1. Interaction with PSEN1, cleaves CDH1 resulting in the disassociation of cadherin-based adherens junctions (CAJs). Interacts with AJAP1 and DLGAP5. Interacts with TBC1D2. Interacts with LIMA1. Interacts with CAV1. Interacts with PIP5K1C. Interacts with RAB8B. Interacts with DDR1; this stabilizes CDH1 at the cell surface and inhibits its internalization. Interacts with RAPGEF2. Interacts with KLRG1. Forms a ternary complex composed of ADAM10, CADH1 and EPHA4; within the complex, CADH1 is cleaved by ADAM10 which disrupts adherens junctions. Interacts with SPEF1. Interacts with CTNNB1 and PKP2. Interacts with AMOTL2; the interaction may facilitate binding of radial actin fibers to cell junction complexes. Interacts with DSG3; the interaction is required for CDH1 localization to developing adherens junctions. During apoptosis or with calcium influx, cleaved by a membrane-bound metalloproteinase (ADAM10), PS1/gamma-secretase and caspase-3. Processing by the metalloproteinase, induced by calcium influx, causes disruption of cell-cell adhesion and the subsequent release of beta-catenin into the cytoplasm. The residual membrane-tethered cleavage product is rapidly degraded via an intracellular proteolytic pathway. Cleavage by caspase-3 releases the cytoplasmic tail resulting in disintegration of the actin microfilament system. The gamma-secretase-mediated cleavage promotes disassembly of adherens junctions. During development of the cochlear organ of Corti, cleavage by ADAM10 at adherens junctions promotes pillar cell separation. Post-translationally, O-glycosylated. O-manosylated by TMTC1, TMTC2, TMTC3 or TMTC4. Ser-287 and Thr-511 are O-manosylated by TMTC2 or TMTC4 but not TMTC1 or TMTC3. In terms of processing, N-glycosylation at Asn-639 is essential for expression, folding and trafficking. Addition of bisecting N-acetylglucosamine by MGAT3 modulates its cell membrane location. Ubiquitinated by a SCF complex containing SKP2, which requires prior phosphorylation by CK1/CSNK1A1. Ubiquitinated by CBLL1/HAKAI, requires prior phosphorylation at Tyr-756. In terms of tissue distribution, expressed in inner and outer pillar cells of the organ of Corti (at protein level). Expressed in granuloma macrophages (at protein level). Expressed in the epidermal keratinocytes of the skin from birth (at protein level). Expressed in non-neural epithelial tissues.

The protein localises to the cell junction. Its subcellular location is the adherens junction. It localises to the cell membrane. It is found in the endosome. The protein resides in the golgi apparatus. The protein localises to the trans-Golgi network. Its subcellular location is the cytoplasm. It localises to the desmosome. In terms of biological role, cadherins are calcium-dependent cell adhesion proteins. They preferentially interact with themselves in a homophilic manner in connecting cells; cadherins may thus contribute to the sorting of heterogeneous cell types. CDH1 is involved in mechanisms regulating cell-cell adhesions, mobility and proliferation of epithelial cells. Promotes organization of radial actin fiber structure and cellular response to contractile forces, via its interaction with AMOTL2 which facilitates anchoring of radial actin fibers to CDH1 junction complexes at the cell membrane. Plays a role in the early stages of desmosome cell-cell junction formation via facilitating the recruitment of DSG2 and DSP to desmosome plaques. Has a potent invasive suppressor role. It is a ligand for integrin alpha-E/beta-7. Its function is as follows. E-Cad/CTF2 promotes non-amyloidogenic degradation of Abeta precursors. Has a strong inhibitory effect on APP C99 and C83 production. Functionally, (Microbial infection) Does not function as a receptor for L.monocytogenes internalin A (InlA); mutating a single surface-exposed residue confers receptor activity to this protein and promotes uptake of the bacteria. This is Cadherin-1 (Cdh1) from Mus musculus (Mouse).